Reading from the N-terminus, the 249-residue chain is Globin-like protein 9 (249 aa).

The disordered stretch occupies residues 20 to 43; sequence TNKGPNGLARRGTQRGCSRSKSTR. In terms of domain architecture, Globin spans 52-205; that stretch reads SLTFSQKQAL…LIDELRGGFE (154 aa). His-116 and His-148 together coordinate heme.

This sequence belongs to the globin family.

This chain is Globin-like protein 9 (glb-9), found in Caenorhabditis elegans.